The chain runs to 83 residues: Exodeoxyribonuclease 7 small subunit (83 aa).

Belongs to the XseB family. As to quaternary structure, heterooligomer composed of large and small subunits.

It is found in the cytoplasm. The catalysed reaction is Exonucleolytic cleavage in either 5'- to 3'- or 3'- to 5'-direction to yield nucleoside 5'-phosphates.. In terms of biological role, bidirectionally degrades single-stranded DNA into large acid-insoluble oligonucleotides, which are then degraded further into small acid-soluble oligonucleotides. The protein is Exodeoxyribonuclease 7 small subunit of Rhodopseudomonas palustris (strain ATCC BAA-98 / CGA009).